The chain runs to 525 residues: Pre-mRNA-processing factor 19 homolog 2 (525 aa).

The U-box domain maps to 1–70 (MNCAISGEVP…PKTLHTASIP (70 aa)). 7 WD repeats span residues 220 to 261 (TNKP…STLT), 262 to 301 (GHSKKVTSVKFVGDSDLVLTASADKTVRIWRNPGDGNYAC), 307 to 346 (DHSAEVRAVTVHPTNKYFVSASLDGTWCFYDLSSGSCLAQ), 351 to 390 (SKNVDYTAAAFHPDGLILGTGTSQSVVKIWDVKSQANVAK), 393 to 431 (GHTGEVTAISFSENGYFLATAAEDGVRLWDLRKLRNFKS), 433 to 469 (LSADANSVEFDPSGSYLGIAASDIKVYQTASVKAEWN), and 478 to 517 (SGTGKATCVKFGSDAQYVAVGSMDRNLRIFGLPGDEKANV). The DWD box motif lies at 409-424 (FLATAAEDGVRLWDLR).

It belongs to the WD repeat PRP19 family. In terms of assembly, homotetramer. Component of the multiprotein assembly MOS4-associated complex (MAC) at least composed of MOS4, CDC5, PRL1 and PRP19 which is related to the PRP19C/Prp19 complex/NTC/Nineteen complex identified in other organisms. Associated with the spliceosome.

It is found in the nucleus. The enzyme catalyses S-ubiquitinyl-[E2 ubiquitin-conjugating enzyme]-L-cysteine + [acceptor protein]-L-lysine = [E2 ubiquitin-conjugating enzyme]-L-cysteine + N(6)-ubiquitinyl-[acceptor protein]-L-lysine.. It functions in the pathway protein modification; protein ubiquitination. Probable ubiquitin-protein ligase which is mainly involved pre-mRNA splicing and DNA repair. Component of the MAC complex that probably regulates defense responses through transcriptional control and thereby is essential for plant innate immunity. This Arabidopsis thaliana (Mouse-ear cress) protein is Pre-mRNA-processing factor 19 homolog 2 (PRP19B).